Here is a 697-residue protein sequence, read N- to C-terminus: Sialidase B (697 aa).

A signal peptide spans 1–29; that stretch reads MNKRGLYSKLGISVVGISLLMGVPTLIHA. Substrate is bound at residue Arg245. Catalysis depends on Asp270, which acts as the Proton acceptor. BNR repeat units lie at residues 280 to 291, 462 to 473, and 517 to 528; these read SYSDDNGKTWSE, TTSQNRGESWEQ, and LISDDSGQTWKK. Glu541 is an active-site residue. Arg557 contributes to the substrate binding site. The BNR 4 repeat unit spans residues 566–577; it reads MTSRDSGETWSK. Arg619 contacts substrate. The Nucleophile role is filled by Tyr653.

Belongs to the glycosyl hydrolase 33 family.

It catalyses the reaction Hydrolysis of alpha-(2-&gt;3)-, alpha-(2-&gt;6)-, alpha-(2-&gt;8)- glycosidic linkages of terminal sialic acid residues in oligosaccharides, glycoproteins, glycolipids, colominic acid and synthetic substrates.. The sequence is that of Sialidase B (nanB) from Streptococcus pneumoniae serotype 4 (strain ATCC BAA-334 / TIGR4).